The following is a 123-amino-acid chain: UPF0102 protein PSHAa2523 (123 aa).

The protein belongs to the UPF0102 family.

This chain is UPF0102 protein PSHAa2523, found in Pseudoalteromonas translucida (strain TAC 125).